We begin with the raw amino-acid sequence, 338 residues long: Methionine import ATP-binding protein MetN 1 (338 aa).

The ABC transporter domain maps to 2-241 (IELHQVSKSF…AKHATTKRFV (240 aa)). 38-45 (GYSGAGKS) serves as a coordination point for ATP.

It belongs to the ABC transporter superfamily. Methionine importer (TC 3.A.1.24) family. As to quaternary structure, the complex is composed of two ATP-binding proteins (MetN), two transmembrane proteins (MetI) and a solute-binding protein (MetQ).

The protein resides in the cell membrane. The enzyme catalyses L-methionine(out) + ATP + H2O = L-methionine(in) + ADP + phosphate + H(+). The catalysed reaction is D-methionine(out) + ATP + H2O = D-methionine(in) + ADP + phosphate + H(+). Functionally, part of the ABC transporter complex MetNIQ involved in methionine import. Responsible for energy coupling to the transport system. The protein is Methionine import ATP-binding protein MetN 1 of Listeria innocua serovar 6a (strain ATCC BAA-680 / CLIP 11262).